A 195-amino-acid polypeptide reads, in one-letter code: Small ribosomal subunit protein uS4 (195 aa).

In terms of domain architecture, S4 RNA-binding spans 88–150; it reads RRLENVVYRL…SKNVELIKLA (63 aa).

Belongs to the universal ribosomal protein uS4 family. As to quaternary structure, part of the 30S ribosomal subunit. Contacts protein S5. The interaction surface between S4 and S5 is involved in control of translational fidelity.

In terms of biological role, one of the primary rRNA binding proteins, it binds directly to 16S rRNA where it nucleates assembly of the body of the 30S subunit. With S5 and S12 plays an important role in translational accuracy. This is Small ribosomal subunit protein uS4 from Fusobacterium nucleatum subsp. nucleatum (strain ATCC 25586 / DSM 15643 / BCRC 10681 / CIP 101130 / JCM 8532 / KCTC 2640 / LMG 13131 / VPI 4355).